The primary structure comprises 340 residues: Anthranilate phosphoribosyltransferase (340 aa).

5-phospho-alpha-D-ribose 1-diphosphate is bound by residues Gly79, 82 to 83, Thr87, 89 to 92, 107 to 115, and Ser119; these read GD, NIST, and KHGNRAVTG. Residue Gly79 participates in anthranilate binding. Ser91 is a Mg(2+) binding site. Asn110 lines the anthranilate pocket. Position 165 (Arg165) interacts with anthranilate. Residues Asp224 and Glu225 each coordinate Mg(2+).

This sequence belongs to the anthranilate phosphoribosyltransferase family. Homodimer. Mg(2+) serves as cofactor.

It catalyses the reaction N-(5-phospho-beta-D-ribosyl)anthranilate + diphosphate = 5-phospho-alpha-D-ribose 1-diphosphate + anthranilate. The protein operates within amino-acid biosynthesis; L-tryptophan biosynthesis; L-tryptophan from chorismate: step 2/5. Catalyzes the transfer of the phosphoribosyl group of 5-phosphorylribose-1-pyrophosphate (PRPP) to anthranilate to yield N-(5'-phosphoribosyl)-anthranilate (PRA). The protein is Anthranilate phosphoribosyltransferase of Syntrophomonas wolfei subsp. wolfei (strain DSM 2245B / Goettingen).